The following is a 64-amino-acid chain: Large ribosomal subunit protein bL35 (64 aa).

It belongs to the bacterial ribosomal protein bL35 family.

The polypeptide is Large ribosomal subunit protein bL35 (Chloroherpeton thalassium (strain ATCC 35110 / GB-78)).